Here is a 417-residue protein sequence, read N- to C-terminus: D-galactonate dehydratase family member Dd703_0947 (417 aa).

Histidine 127 is a substrate binding site. The Proton donor/acceptor role is filled by tyrosine 158. Position 223 (aspartate 223) interacts with Mg(2+). Catalysis depends on histidine 225, which acts as the Proton donor/acceptor. Mg(2+)-binding residues include glutamate 249 and glutamate 275. Substrate is bound by residues glutamate 275, arginine 296, histidine 325, aspartate 329, and glutamate 352.

The protein belongs to the mandelate racemase/muconate lactonizing enzyme family. GalD subfamily. Requires Mg(2+) as cofactor.

The enzyme catalyses D-mannonate = 2-dehydro-3-deoxy-D-gluconate + H2O. It carries out the reaction D-gluconate = 2-dehydro-3-deoxy-D-gluconate + H2O. Functionally, has low dehydratase activity with D-mannonate and D-gluconate, suggesting that these are not physiological substrates and that it has no significant role in the in vivo degradation of these compounds. Has no detectable activity with a panel of 70 other acid sugars (in vitro). The sequence is that of D-galactonate dehydratase family member Dd703_0947 from Musicola paradisiaca (strain Ech703) (Dickeya paradisiaca).